Here is a 369-residue protein sequence, read N- to C-terminus: Glutamine synthetase (369 aa).

A GS beta-grasp domain is found at 23–102 (VIAEYIWVDS…VLAECWNNDG (80 aa)). Positions 109 to 369 (HRHEAAKLFE…MSKEFERESS (261 aa)) constitute a GS catalytic domain.

Belongs to the glutamine synthetase family. Homooctamer.

It localises to the cytoplasm. It catalyses the reaction L-glutamate + NH4(+) + ATP = L-glutamine + ADP + phosphate + H(+). This is Glutamine synthetase (GLN1) from Eremothecium gossypii (strain ATCC 10895 / CBS 109.51 / FGSC 9923 / NRRL Y-1056) (Yeast).